The chain runs to 513 residues: Tryptophan--tRNA ligase 1 (513 aa).

Residues 86 to 94 (PTGDPHIGH) carry the 'HIGH' region motif. The short motif at 393 to 397 (KMSSS) is the 'KMSKS' region element.

It belongs to the class-I aminoacyl-tRNA synthetase family.

It is found in the cytoplasm. The catalysed reaction is tRNA(Trp) + L-tryptophan + ATP = L-tryptophyl-tRNA(Trp) + AMP + diphosphate + H(+). The polypeptide is Tryptophan--tRNA ligase 1 (Halobacterium salinarum (strain ATCC 700922 / JCM 11081 / NRC-1) (Halobacterium halobium)).